Reading from the N-terminus, the 278-residue chain is Thiazole synthase (278 aa).

Lysine 107 functions as the Schiff-base intermediate with DXP in the catalytic mechanism. 1-deoxy-D-xylulose 5-phosphate contacts are provided by residues glycine 168, 194-195 (AG), and 216-217 (AS).

It belongs to the ThiG family. Homotetramer. Forms heterodimers with either ThiH or ThiS.

Its subcellular location is the cytoplasm. The enzyme catalyses [ThiS sulfur-carrier protein]-C-terminal-Gly-aminoethanethioate + 2-iminoacetate + 1-deoxy-D-xylulose 5-phosphate = [ThiS sulfur-carrier protein]-C-terminal Gly-Gly + 2-[(2R,5Z)-2-carboxy-4-methylthiazol-5(2H)-ylidene]ethyl phosphate + 2 H2O + H(+). Its pathway is cofactor biosynthesis; thiamine diphosphate biosynthesis. Its function is as follows. Catalyzes the rearrangement of 1-deoxy-D-xylulose 5-phosphate (DXP) to produce the thiazole phosphate moiety of thiamine. Sulfur is provided by the thiocarboxylate moiety of the carrier protein ThiS. In vitro, sulfur can be provided by H(2)S. The sequence is that of Thiazole synthase from Corynebacterium urealyticum (strain ATCC 43042 / DSM 7109).